The sequence spans 173 residues: Photosystem I assembly protein Ycf3 (173 aa).

TPR repeat units follow at residues 35-68 (AFVYYRDGMSAQADGEYKEALDNYYEALKLEDDA), 72-105 (SYILYNIGIIHGSNGEHERALEYYHEAIELNPNL), and 120-153 (GERAKEEGREDESEALFDKAAEYWKQAIRLAPNN).

This sequence belongs to the Ycf3 family.

The protein resides in the cellular thylakoid membrane. Functionally, essential for the assembly of the photosystem I (PSI) complex. May act as a chaperone-like factor to guide the assembly of the PSI subunits. This is Photosystem I assembly protein Ycf3 from Gloeothece citriformis (strain PCC 7424) (Cyanothece sp. (strain PCC 7424)).